A 203-amino-acid chain; its full sequence is Large ribosomal subunit protein bL25 (203 aa).

The interval 182-203 is disordered; sequence EITEEPETEEKKEEGASSVSNS.

Belongs to the bacterial ribosomal protein bL25 family. CTC subfamily. Part of the 50S ribosomal subunit; part of the 5S rRNA/L5/L18/L25 subcomplex. Contacts the 5S rRNA. Binds to the 5S rRNA independently of L5 and L18.

Functionally, this is one of the proteins that binds to the 5S RNA in the ribosome where it forms part of the central protuberance. The polypeptide is Large ribosomal subunit protein bL25 (Caldicellulosiruptor saccharolyticus (strain ATCC 43494 / DSM 8903 / Tp8T 6331)).